Here is a 145-residue protein sequence, read N- to C-terminus: MADSDNTPTSRKDFETAIIAKAWKDPEYLRRLRSNPREVLQEELEALHPGAQLPDDLGISIHEEDENHVHLVMPRHPQNVSDQTLTDDDLDQAAGGTGIGVVVAVVAGAVANTGAGVNQVAGGNINVVGNINVNANVSVNMNQTT.

Residues 1-96 (MADSDNTPTS…DDDLDQAAGG (96 aa)) constitute a propeptide that is removed on maturation. A 2-oxo-5,5-dimethylhexanoate modification is found at Thr-97. Ile-99 carries the 3-methylisoleucine modification. Residue Val-101 is modified to 3-methylvaline. Val-102 is subject to 3-methyl-D-valine. Residue Val-103 is modified to 3-methylvaline. Ala-104 bears the D-alanine (Ala) mark. Val-105 is subject to 3-methylvaline. 3-methyl-D-valine is present on residues Val-106 and Val-110. The residue at position 112 (Asn-112) is an N4-methyl-D-asparagine. Position 113 is a 3-hydroxyvaline (Thr) (Thr-113). Val-117 is modified (3-methylvaline). Asn-118 is modified (N4-methyl-D-asparagine). Gln-119 carries the (3S)-3-methylglutamine modification. At Val-120 the chain carries 3-hydroxy-D-valine. An N4-methyl-D-asparagine modification is found at Asn-124. Asn-126 carries the post-translational modification (3R)-N4-methyl-3-hydroxy-D-asparagine. Val-127 is modified (3-methylvaline). Residue Val-128 is modified to 3-hydroxy-D-valine. N4-methyl-D-asparagine occurs at positions 130 and 132. Residue Asn-134 is modified to (3R)-N4-methyl-3-hydroxy-D-asparagine. At Asn-136 the chain carries N4-methyl-D-asparagine. Residue Ser-138 is modified to D-serine (Ser). Asn-140 carries the post-translational modification D-asparagine. Met-141 carries the post-translational modification 3,3-dimethylmethionine. Asn-142 is modified (D-asparagine). Thr-144 carries the post-translational modification D-threonine.

Post-translationally, epimerization of most, and perhaps all, L- to D-amino acids is catalyzed by PoyD, when PoyA and PoyD are coexpressed in E.coli. In terms of processing, N-methylations are catalyzed by PoyE, when PoyA and PoyE are coexpressed in E.coli. To obtain 2-oxo-5,5-dimethylhexanoate, Thr-97 is firstly dehydrated by PoyF. The second step possibly corresponds to methylation by PoyB/C, and the third step may be a cleavage by PoyH/J.

Functionally, antimicrobial peptide active against Gram-positive bacteria (MIC=4-&gt;125 ug/ml). May act by forming transmembrane ion channels, since the peptide rapidly depolarizes the bacterial cytoplasmic membrane, simultaneously decreasing the membrane potential and intracellular potassium contents. The sequence is that of Polytheonamide B from Bacterium symbiont subsp. Theonella swinhoei (strain pTSMAC1).